Here is a 189-residue protein sequence, read N- to C-terminus: Ras-like protein 1 (189 aa).

GTP is bound at residue 10–17 (GAGGVGKS). The Effector region signature appears at 32-40 (YDPTIEDSY). GTP is bound by residues 57-61 (DTAGQ) and 116-119 (NKCD). C186 bears the Cysteine methyl ester mark. The S-geranylgeranyl cysteine moiety is linked to residue C186. Positions 187–189 (KML) are cleaved as a propeptide — removed in mature form.

Belongs to the small GTPase superfamily. Ras family.

The protein localises to the cell membrane. The catalysed reaction is GTP + H2O = GDP + phosphate + H(+). Its activity is regulated as follows. Alternates between an inactive form bound to GDP and an active form bound to GTP. Activated by a guanine nucleotide-exchange factor (GEF) and inactivated by a GTPase-activating protein (GAP). In terms of biological role, ras proteins bind GDP/GTP and possess intrinsic GTPase activity. Plays a role in eye development by regulating cell growth, survival of postmitotic ommatidial cells and differentiation of photoreceptor cells. During larval development, mediates Ptth/tor signaling leading to the production of ecdysone, a hormone required for the initiation of metamorphosis. This Drosophila ananassae (Fruit fly) protein is Ras-like protein 1.